Here is a 311-residue protein sequence, read N- to C-terminus: Mediator of RNA polymerase II transcription subunit 27-B (311 aa).

It belongs to the Mediator complex subunit 27 family. In terms of assembly, component of the Mediator complex.

Its subcellular location is the nucleus. In terms of biological role, component of the Mediator complex, a coactivator involved in the regulated transcription of nearly all RNA polymerase II-dependent genes. Mediator functions as a bridge to convey information from gene-specific regulatory proteins to the basal RNA polymerase II transcription machinery. Mediator is recruited to promoters by direct interactions with regulatory proteins and serves as a scaffold for the assembly of a functional preinitiation complex with RNA polymerase II and the general transcription factors. This chain is Mediator of RNA polymerase II transcription subunit 27-B (med27-b), found in Xenopus laevis (African clawed frog).